The primary structure comprises 1228 residues: ABC transporter B family member 16 (1228 aa).

Helical transmembrane passes span 22–42 (MGLGLIGAVGDGFITPILFFI), 69–89 (LAMLYVACASWVICFLEGYCW), 145–167 (LPNILMNASAFVGSYIVGFMLLW), 171–193 (IVGFPFIILLLIPGLMYGRALIG), 251–271 (GIAIGSNGIVYAIWGFLTWYG), and 283–303 (GTVSTVTVCVTFGGTALGQAL). The ABC transmembrane type-1 1 domain maps to 22–311 (MGLGLIGAVG…ALSNLKYFSE (290 aa)). In terms of domain architecture, ABC transporter 1 spans 346-582 (VEFNNVKCKY…DGKYTSLVRL (237 aa)). An ATP-binding site is contributed by 381 to 388 (GGSGSGKS). N-linked (GlcNAc...) asparagine glycosylation is found at Asn-529, Asn-593, and Asn-628. An ABC transmembrane type-1 2 domain is found at 658-946 (ALCGCLSASL…AGTMTTDLAK (289 aa)). A run of 2 helical transmembrane segments spans residues 667–687 (LGGAVQPIYAYSSGLMISVFF) and 700–720 (IYVLLFFGLALFTFFTSISQQ). N-linked (GlcNAc...) asparagine glycosylation occurs at Asn-755. 2 helical membrane-spanning segments follow: residues 781–801 (LLVQTISTVMVACTIGLVIAW) and 805–825 (IVMISVQPVIIVCYYIQRVLL). Asn-827 is a glycosylation site (N-linked (GlcNAc...) asparagine). 2 helical membrane passes run 881–901 (SWLAGIMLGTTQSLITCTSAL) and 920–940 (FFELFLIFKTTGRAIAEAGTM). The 239-residue stretch at 981 to 1219 (ITFLNVDFAY…GPTGSYFSLV (239 aa)) folds into the ABC transporter 2 domain. Asn-1001 carries N-linked (GlcNAc...) asparagine glycosylation. ATP is bound at residue 1016–1023 (GPSRSGKS).

It belongs to the ABC transporter superfamily. ABCB family. Multidrug resistance exporter (TC 3.A.1.201) subfamily.

It localises to the membrane. The chain is ABC transporter B family member 16 (ABCB16) from Arabidopsis thaliana (Mouse-ear cress).